A 223-amino-acid polypeptide reads, in one-letter code: MKTLGVLFIAAWFIACTHSFPGAHDEDSKEERKNVDTVLVLPSIERDQMMAATFDFPSLSFEDSDEGSNWNWNTLLRPNFLDGWYQTLQSAISAHMKKVREQMAGILSRIPEQGVVNWNKIPEGANTTSTTKIIDGHVVTINETTYTDGSDDYSTLIRVRVIDVRPQNETILTTVSSEADSDVTTLPTLIGKNETSTQSSRSVESVEDFDNEIPKNQGDVLTA.

Residues 1–19 (MKTLGVLFIAAWFIACTHS) form the signal peptide. Asn126, Asn142, Asn168, and Asn193 each carry an N-linked (GlcNAc...) asparagine glycan. A compositionally biased stretch (polar residues) spans 186–203 (LPTLIGKNETSTQSSRSV). The segment at 186-223 (LPTLIGKNETSTQSSRSVESVEDFDNEIPKNQGDVLTA) is disordered.

In terms of tissue distribution, expressed by the venom duct.

It localises to the secreted. This chain is Icarapin, found in Apis mellifera carnica (Carniolan honeybee).